Reading from the N-terminus, the 321-residue chain is Lipoyl synthase (321 aa).

[4Fe-4S] cluster contacts are provided by Cys68, Cys73, Cys79, Cys94, Cys98, Cys101, and Ser308. The region spanning 80–297 (FNHGTATFMI…KAEAMAMGFT (218 aa)) is the Radical SAM core domain.

Belongs to the radical SAM superfamily. Lipoyl synthase family. Requires [4Fe-4S] cluster as cofactor.

The protein localises to the cytoplasm. It catalyses the reaction [[Fe-S] cluster scaffold protein carrying a second [4Fe-4S](2+) cluster] + N(6)-octanoyl-L-lysyl-[protein] + 2 oxidized [2Fe-2S]-[ferredoxin] + 2 S-adenosyl-L-methionine + 4 H(+) = [[Fe-S] cluster scaffold protein] + N(6)-[(R)-dihydrolipoyl]-L-lysyl-[protein] + 4 Fe(3+) + 2 hydrogen sulfide + 2 5'-deoxyadenosine + 2 L-methionine + 2 reduced [2Fe-2S]-[ferredoxin]. It functions in the pathway protein modification; protein lipoylation via endogenous pathway; protein N(6)-(lipoyl)lysine from octanoyl-[acyl-carrier-protein]: step 2/2. Functionally, catalyzes the radical-mediated insertion of two sulfur atoms into the C-6 and C-8 positions of the octanoyl moiety bound to the lipoyl domains of lipoate-dependent enzymes, thereby converting the octanoylated domains into lipoylated derivatives. In Klebsiella pneumoniae (strain 342), this protein is Lipoyl synthase.